The following is a 317-amino-acid chain: Serpentine receptor class delta-44 (317 aa).

The next 6 helical transmembrane spans lie at 5–25 (ILSVLNPTVFVLSLCFQIILI), 90–110 (MFHILQTSSLVSGLTVFLTTF), 130–150 (ILFISSIVLISAGCGILLVII), 185–205 (RVNGIIINGLVVIVPITCLLL), 235–255 (IFGHTLVYVPIFICSTISLIT), and 264–284 (FFIFVLPHLTTVIDPLLTMYF).

This sequence belongs to the nematode receptor-like protein srd family.

It is found in the membrane. In Caenorhabditis elegans, this protein is Serpentine receptor class delta-44 (srd-44).